A 428-amino-acid polypeptide reads, in one-letter code: Leucine-rich repeat-containing protein 42 (428 aa).

LRR repeat units lie at residues 149-170 (VLCS…EEIK), 174-195 (ELTC…LEHL), 202-222 (SVTQ…RKMT), 234-255 (NLTL…GYLF), and 259-280 (KLNC…KHKL). Positions 379 to 412 (KHEAISSQESKKSKKRPFEESETEQNNSSQPSKQ) are disordered. 2 positions are modified to phosphoserine: S406 and S407.

This sequence belongs to the LRRC42 family.

In Homo sapiens (Human), this protein is Leucine-rich repeat-containing protein 42 (LRRC42).